The following is a 188-amino-acid chain: Cytochrome c oxidase assembly protein CtaG (188 aa).

Residues 1-8 (MSKKSNKN) lie on the Cytoplasmic side of the membrane. A helical; Signal-anchor for type II membrane protein transmembrane segment spans residues 9–31 (LAFSLLGLIISMVLLSFASVPIY). Residues 32-188 (NLFCKVTGYG…SSLRGNYVSN (157 aa)) are Periplasmic-facing.

The protein belongs to the COX11/CtaG family.

It is found in the cell inner membrane. Exerts its effect at some terminal stage of cytochrome c oxidase synthesis, probably by being involved in the insertion of the copper B into subunit I. The polypeptide is Cytochrome c oxidase assembly protein CtaG (Rickettsia conorii (strain ATCC VR-613 / Malish 7)).